Here is a 426-residue protein sequence, read N- to C-terminus: 3-phosphoshikimate 1-carboxyvinyltransferase (426 aa).

Positions 22, 23, and 27 each coordinate 3-phosphoshikimate. K22 is a phosphoenolpyruvate binding site. Residues G96 and R124 each contribute to the phosphoenolpyruvate site. Positions 170, 171, 172, 198, 314, 337, and 341 each coordinate 3-phosphoshikimate. Q172 is a binding site for phosphoenolpyruvate. Catalysis depends on D314, which acts as the Proton acceptor. Phosphoenolpyruvate contacts are provided by R345, R387, and K412.

It belongs to the EPSP synthase family. In terms of assembly, monomer.

Its subcellular location is the cytoplasm. It catalyses the reaction 3-phosphoshikimate + phosphoenolpyruvate = 5-O-(1-carboxyvinyl)-3-phosphoshikimate + phosphate. The protein operates within metabolic intermediate biosynthesis; chorismate biosynthesis; chorismate from D-erythrose 4-phosphate and phosphoenolpyruvate: step 6/7. Catalyzes the transfer of the enolpyruvyl moiety of phosphoenolpyruvate (PEP) to the 5-hydroxyl of shikimate-3-phosphate (S3P) to produce enolpyruvyl shikimate-3-phosphate and inorganic phosphate. The chain is 3-phosphoshikimate 1-carboxyvinyltransferase from Shewanella woodyi (strain ATCC 51908 / MS32).